The primary structure comprises 207 residues: 3-demethoxyubiquinol 3-hydroxylase (207 aa).

A compositionally biased stretch (basic and acidic residues) spans 22-32; that stretch reads ERANPADRLAP. Residues 22-41 are disordered; it reads ERANPADRLAPETEQMNPEE. The Fe cation site is built by glutamate 56, glutamate 86, histidine 89, glutamate 138, glutamate 170, and histidine 173.

Belongs to the COQ7 family. It depends on Fe cation as a cofactor.

The protein localises to the cell membrane. It carries out the reaction a 5-methoxy-2-methyl-3-(all-trans-polyprenyl)benzene-1,4-diol + AH2 + O2 = a 3-demethylubiquinol + A + H2O. It participates in cofactor biosynthesis; ubiquinone biosynthesis. Its function is as follows. Catalyzes the hydroxylation of 2-nonaprenyl-3-methyl-6-methoxy-1,4-benzoquinol during ubiquinone biosynthesis. The chain is 3-demethoxyubiquinol 3-hydroxylase from Cupriavidus metallidurans (strain ATCC 43123 / DSM 2839 / NBRC 102507 / CH34) (Ralstonia metallidurans).